The sequence spans 131 residues: uncharacterized protein (131 aa).

This is an uncharacterized protein from Saccharomyces cerevisiae (strain ATCC 204508 / S288c) (Baker's yeast).